The primary structure comprises 92 residues: Toxin RelE3 (92 aa).

This sequence belongs to the RelE toxin family.

In terms of biological role, toxic component of a type II toxin-antitoxin (TA) system. Its toxic effect is neutralized by coexpression with cognate antitoxin RelB3 but no other ParD or RelB antitoxin. This Caulobacter vibrioides (strain ATCC 19089 / CIP 103742 / CB 15) (Caulobacter crescentus) protein is Toxin RelE3 (relE3).